The following is a 353-amino-acid chain: Uroporphyrinogen decarboxylase (353 aa).

Substrate-binding positions include 30-34 (RQAGR), Asp-79, Tyr-154, Ser-209, and His-332.

The protein belongs to the uroporphyrinogen decarboxylase family. As to quaternary structure, homodimer.

The protein localises to the cytoplasm. It carries out the reaction uroporphyrinogen III + 4 H(+) = coproporphyrinogen III + 4 CO2. Its pathway is porphyrin-containing compound metabolism; protoporphyrin-IX biosynthesis; coproporphyrinogen-III from 5-aminolevulinate: step 4/4. Catalyzes the decarboxylation of four acetate groups of uroporphyrinogen-III to yield coproporphyrinogen-III. The polypeptide is Uroporphyrinogen decarboxylase (Mycobacterium marinum (strain ATCC BAA-535 / M)).